A 203-amino-acid polypeptide reads, in one-letter code: ADP-ribosylation factor-like protein 6-interacting protein 1 (203 aa).

The Cytoplasmic portion of the chain corresponds to 1-41 (MAEGDNRSTNLLAAETASLEEQLQGWGEVMLMADKVLRWER). The chain crosses the membrane as a helical span at residues 42–62 (AWFPPAIMGVVSLVFLIIYYL). At 63–65 (DPS) the chain is on the lumenal side. Residues 66 to 86 (VLSGVSCFVMFLCLADYLVPI) traverse the membrane as a helical segment. Topologically, residues 87–133 (LAPRIFGSNKWTTEQQQRFHEICSNLVKTRRRAVGWWKRLFTLKEEK) are cytoplasmic. Residues 134–175 (PKMYFMTMIVSLAAVAWVGQQVHNLLLTYLIVTSLLLLPGLN) form a helical membrane-spanning segment. Over 176–203 (QHGIILKYIGMAKREINKLLKQKEKKNE) the chain is Lumenal.

This sequence belongs to the ARL6ip family. In terms of assembly, homooligomer. Heterodimer with ARL6IP5. Interacts with ARL6. Interacts with TMEM33. Interacts with ATL1. Expressed in all hematopoietic cell lineages, but the highest level of expression is found in early myeloid progenitor cells. Expressed in brain, bone marrow, thymus and lung. Expressed at low level in liver, kidney and spleen. Not detected in heart.

The protein resides in the endomembrane system. It localises to the endoplasmic reticulum membrane. It is found in the endoplasmic reticulum. Positively regulates SLC1A1/EAAC1-mediated glutamate transport by increasing its affinity for glutamate in a PKC activity-dependent manner. Promotes the catalytic efficiency of SLC1A1/EAAC1 probably by reducing its interaction with ARL6IP5, a negative regulator of SLC1A1/EAAC1-mediated glutamate transport. Plays a role in the formation and stabilization of endoplasmic reticulum tubules. Negatively regulates apoptosis, possibly by modulating the activity of caspase-9 (CASP9). Inhibits cleavage of CASP9-dependent substrates and downstream markers of apoptosis but not CASP9 itself. May be involved in protein transport, membrane trafficking, or cell signaling during hematopoietic maturation. This is ADP-ribosylation factor-like protein 6-interacting protein 1 (ARL6IP1) from Homo sapiens (Human).